We begin with the raw amino-acid sequence, 178 residues long: Large ribosomal subunit protein uL10 (178 aa).

Belongs to the universal ribosomal protein uL10 family. As to quaternary structure, part of the ribosomal stalk of the 50S ribosomal subunit. The N-terminus interacts with L11 and the large rRNA to form the base of the stalk. The C-terminus forms an elongated spine to which L12 dimers bind in a sequential fashion forming a multimeric L10(L12)X complex.

Its function is as follows. Forms part of the ribosomal stalk, playing a central role in the interaction of the ribosome with GTP-bound translation factors. The chain is Large ribosomal subunit protein uL10 from Leuconostoc mesenteroides subsp. mesenteroides (strain ATCC 8293 / DSM 20343 / BCRC 11652 / CCM 1803 / JCM 6124 / NCDO 523 / NBRC 100496 / NCIMB 8023 / NCTC 12954 / NRRL B-1118 / 37Y).